We begin with the raw amino-acid sequence, 461 residues long: Isthmin-1 (461 aa).

Positions 1-26 (MVRLAAELLLLLGLLLLTLHITVLRS) are cleaved as a signal peptide. Asparagine 33 carries N-linked (GlcNAc...) asparagine glycosylation. The segment covering 40–58 (QDSRVAENNVNADSSSSVQ) has biased composition (polar residues). 3 disordered regions span residues 40 to 62 (QDSRVAENNVNADSSSSVQLGPG), 73 to 92 (ASQPWAQSPGTGGSLQRDGP), and 128 to 188 (EGSE…NFLK). Residues 131-141 (EPEKGMRKENK) show a composition bias toward basic and acidic residues. Positions 156-165 (SSSSSSSSVS) are enriched in low complexity. The TSP type-1 domain occupies 215 to 259 (DGEGDWSAWSPCSVSCGNGNQKRTRSCGYACTATESRTCDMPSCP). 3 disulfides stabilise this stretch: cysteine 226-cysteine 253, cysteine 230-cysteine 258, and cysteine 241-cysteine 245. The N-linked (GlcNAc...) asparagine glycan is linked to asparagine 282. The region spanning 286–449 (LFGVDTDSCE…QKCAENPQDE (164 aa)) is the AMOP domain.

This sequence belongs to the isthmin family.

The protein localises to the secreted. May specifically influence certain angiogenesis process. The polypeptide is Isthmin-1 (ism1) (Danio rerio (Zebrafish)).